A 114-amino-acid polypeptide reads, in one-letter code: Ribonuclease P protein component (114 aa).

This sequence belongs to the RnpA family. Consists of a catalytic RNA component (M1 or rnpB) and a protein subunit.

It carries out the reaction Endonucleolytic cleavage of RNA, removing 5'-extranucleotides from tRNA precursor.. In terms of biological role, RNaseP catalyzes the removal of the 5'-leader sequence from pre-tRNA to produce the mature 5'-terminus. It can also cleave other RNA substrates such as 4.5S RNA. The protein component plays an auxiliary but essential role in vivo by binding to the 5'-leader sequence and broadening the substrate specificity of the ribozyme. The polypeptide is Ribonuclease P protein component (Clostridioides difficile (strain 630) (Peptoclostridium difficile)).